The following is a 201-amino-acid chain: Diadenylate cyclase CdaS (201 aa).

The DAC domain maps to 54–201; sequence QTLAATYYIQ…LNGILYTISL (148 aa).

This sequence belongs to the adenylate cyclase family. DacB/CdaS subfamily. Probably forms a homohexamer. Mg(2+) serves as cofactor.

The enzyme catalyses 2 ATP = 3',3'-c-di-AMP + 2 diphosphate. Functionally, one of 3 paralogous diadenylate cyclases (DAC) in this bacteria catalyzing the condensation of 2 ATP molecules into cyclic di-AMP (c-di-AMP). It has slow DAC activity with ADP as a substrate and may have weak ADPase activity. Required for efficient spore formation, whereas in B.subtilis, it is required for efficient spore germination. It is produced under the control of different sigma factors in the two bacteria. It is also required for parasporal crystal formation. This chain is Diadenylate cyclase CdaS, found in Bacillus thuringiensis (strain BMB171).